Here is a 353-residue protein sequence, read N- to C-terminus: DNA integrity scanning protein DisA (353 aa).

The DAC domain maps to 6–144 (DKELMNILKI…GGIKYVLRDS (139 aa)). ATP contacts are provided by residues Gly73, Leu91, and 104-108 (TRHRT).

It belongs to the DisA family. In terms of assembly, homooctamer. The cofactor is Mg(2+).

It carries out the reaction 2 ATP = 3',3'-c-di-AMP + 2 diphosphate. Functionally, participates in a DNA-damage check-point that is active prior to asymmetric division when DNA is damaged. DisA forms globular foci that rapidly scan along the chromosomes during sporulation, searching for lesions. When a lesion is present, DisA pauses at the lesion site. This triggers a cellular response that culminates in a temporary block in sporulation initiation. In terms of biological role, also has diadenylate cyclase activity, catalyzing the condensation of 2 ATP molecules into cyclic di-AMP (c-di-AMP). c-di-AMP acts as a signaling molecule that couples DNA integrity with progression of sporulation. The rise in c-di-AMP level generated by DisA while scanning the chromosome, operates as a positive signal that advances sporulation; upon encountering a lesion, the DisA focus arrests at the damaged site and halts c-di-AMP synthesis. In Clostridium botulinum (strain Okra / Type B1), this protein is DNA integrity scanning protein DisA.